Consider the following 315-residue polypeptide: Cytochrome c biogenesis protein CcsA (315 aa).

8 helical membrane passes run 15-35 (SCFL…GFGG), 39-59 (FSFT…LQLI), 73-93 (LYES…YIEV), 97-117 (TLFL…FTDF), 144-164 (VMIA…AYLV), 222-242 (TIGI…IWAN), 257-277 (WAFI…VGGW), and 283-303 (ALVA…VNLL).

Belongs to the CcmF/CycK/Ccl1/NrfE/CcsA family. May interact with Ccs1.

It localises to the plastid. It is found in the chloroplast thylakoid membrane. Functionally, required during biogenesis of c-type cytochromes (cytochrome c6 and cytochrome f) at the step of heme attachment. The protein is Cytochrome c biogenesis protein CcsA of Chlorella vulgaris (Green alga).